Here is a 765-residue protein sequence, read N- to C-terminus: LPS-assembly protein LptD (765 aa).

Residues 1 to 18 form the signal peptide; it reads MQIRYFLALSLLPQVVLA.

Belongs to the LptD family. In terms of assembly, component of the lipopolysaccharide transport and assembly complex. Interacts with LptE and LptA.

Its subcellular location is the cell outer membrane. In terms of biological role, together with LptE, is involved in the assembly of lipopolysaccharide (LPS) at the surface of the outer membrane. This chain is LPS-assembly protein LptD, found in Shewanella sp. (strain ANA-3).